The following is a 639-amino-acid chain: MLTLRERQINAIKQMLNLNSQQPKALAAEPVWKILIYDRVGQDIISPIISIKELRELGVTLHVQLHSDRDSIPDVPAIYFCLPTDENLDRIQQDFSSGLYDVYHLNFLAPITRSKIENLAAAALHAGCVANIHRVYDQYVNFISLEDDFFILKHQQSDQLSYYAINRANTRDEEMEALMDSIVDSLFALFVTLGNVPIIRCPRNSAAEMVARKLEKKLRENLWDARANLFHMDATQAGGGVFSFQRPVLLLLDRNMDLATPLHHTWSYQALVHDVLDLGLNLVYVEDETASAGARKKPKACDLDRNDRFWMTHKGSPFPTVAEAIQEELESYRNSEEEIKRLKTSMGIEGESDIAFSLVNDTTARLTNAVNSLPQLMEKKRLIDMHTKIATAILNFIKARRLDSFFEIEEKVMSKQTLDRPLLDLLRDGEFGQAEDKLRLYIIYFICAQQLPESEQERLKEALQAAGCDLTALAYVQRWKGIMNRSPSISQATQYEGGGTKTVSMFTKLVSQGSSFVMEGVKNLVVKRHNLPVTKITEQVMECRSNAETDDYLYLDPKLLKGGEVLPKNRAPFQDAVVFMVGGGNYIEYQNLVDFIKQKQTSNVQRRIIYGASTLTNARQFLKELSALGGEIQSPTATS.

4 consecutive repeat copies span residues 85–121 (DENLDRIQQDFSSGLYDVYHLNFLAPITRSKIENLAA), 203–245 (RNSA…FSFQ), 423–460 (LDLLRDGEFGQAEDKLRLYIIYFICAQQLPESEQERLK), and 464–500 (QAAGCDLTALAYVQRWKGIMNRSPSISQATQYEGGGT). The interval 85–500 (DENLDRIQQD…QATQYEGGGT (416 aa)) is 4 X approximate repeats.

Belongs to the STXBP/unc-18/SEC1 family. In embryos, from stage 14, expression is seen in posterior midgut, esophagus and salivary glands. No expression is seen in larval imaginal disks.

The protein resides in the cytoplasm. Its subcellular location is the membrane. Non-vital for development. In Drosophila melanogaster (Fruit fly), this protein is Protein sly1 homolog (Slh).